Reading from the N-terminus, the 550-residue chain is Chaperonin GroEL (550 aa).

ATP is bound by residues 30-33 (TLGP), Lys51, 87-91 (DGTTT), Gly415, and Asp496.

This sequence belongs to the chaperonin (HSP60) family. Forms a cylinder of 14 subunits composed of two heptameric rings stacked back-to-back. Interacts with the co-chaperonin GroES.

The protein resides in the cytoplasm. The catalysed reaction is ATP + H2O + a folded polypeptide = ADP + phosphate + an unfolded polypeptide.. Functionally, together with its co-chaperonin GroES, plays an essential role in assisting protein folding. The GroEL-GroES system forms a nano-cage that allows encapsulation of the non-native substrate proteins and provides a physical environment optimized to promote and accelerate protein folding. The protein is Chaperonin GroEL of Rickettsia bellii (strain OSU 85-389).